The primary structure comprises 924 residues: Isoleucine--tRNA ligase (924 aa).

A 'HIGH' region motif is present at residues 58 to 68 (PYANGQIHVGH). Position 561 (glutamate 561) interacts with L-isoleucyl-5'-AMP. The 'KMSKS' region signature appears at 602 to 606 (KMSKS). Lysine 605 contacts ATP. 4 residues coordinate Zn(2+): cysteine 887, cysteine 890, cysteine 907, and cysteine 910.

It belongs to the class-I aminoacyl-tRNA synthetase family. IleS type 1 subfamily. As to quaternary structure, monomer. The cofactor is Zn(2+).

The protein resides in the cytoplasm. The enzyme catalyses tRNA(Ile) + L-isoleucine + ATP = L-isoleucyl-tRNA(Ile) + AMP + diphosphate. In terms of biological role, catalyzes the attachment of isoleucine to tRNA(Ile). As IleRS can inadvertently accommodate and process structurally similar amino acids such as valine, to avoid such errors it has two additional distinct tRNA(Ile)-dependent editing activities. One activity is designated as 'pretransfer' editing and involves the hydrolysis of activated Val-AMP. The other activity is designated 'posttransfer' editing and involves deacylation of mischarged Val-tRNA(Ile). The sequence is that of Isoleucine--tRNA ligase from Dichelobacter nodosus (strain VCS1703A).